We begin with the raw amino-acid sequence, 386 residues long: 8-amino-7-oxononanoate synthase (386 aa).

Position 31 (arginine 31) interacts with substrate. Residue 109–110 coordinates pyridoxal 5'-phosphate; sequence GY. Substrate is bound at residue histidine 134. Pyridoxal 5'-phosphate contacts are provided by residues serine 180, 205–208, and 236–239; these read DEAH and TLSK. N6-(pyridoxal phosphate)lysine is present on lysine 239. Residue threonine 349 participates in substrate binding.

This sequence belongs to the class-II pyridoxal-phosphate-dependent aminotransferase family. BioF subfamily. Homodimer. Requires pyridoxal 5'-phosphate as cofactor.

It catalyses the reaction 6-carboxyhexanoyl-[ACP] + L-alanine + H(+) = (8S)-8-amino-7-oxononanoate + holo-[ACP] + CO2. Its pathway is cofactor biosynthesis; biotin biosynthesis. Functionally, catalyzes the decarboxylative condensation of pimeloyl-[acyl-carrier protein] and L-alanine to produce 8-amino-7-oxononanoate (AON), [acyl-carrier protein], and carbon dioxide. This is 8-amino-7-oxononanoate synthase from Mycobacterium bovis (strain ATCC BAA-935 / AF2122/97).